A 237-amino-acid chain; its full sequence is Ribonuclease 3 (237 aa).

The 132-residue stretch at 5-136 folds into the RNase III domain; sequence VDELSARLGV…VIAALFLDQG (132 aa). Glutamate 49 is a Mg(2+) binding site. Aspartate 53 is a catalytic residue. Mg(2+)-binding residues include aspartate 122 and glutamate 125. The active site involves glutamate 125. Positions 163-232 constitute a DRBM domain; sequence DYKSRLQARI…ARAALDALEG (70 aa). Residues 185–208 show a composition bias toward basic and acidic residues; that stretch reads IDRSGPEHRPEFTVEVRAGEERLG. Positions 185-237 are disordered; that stretch reads IDRSGPEHRPEFTVEVRAGEERLGTGKGPSKQAAEQAAARAALDALEGGTDGR. The span at 216 to 231 shows a compositional bias: low complexity; that stretch reads QAAEQAAARAALDALE.

The protein belongs to the ribonuclease III family. As to quaternary structure, homodimer. Mg(2+) serves as cofactor.

The protein resides in the cytoplasm. The catalysed reaction is Endonucleolytic cleavage to 5'-phosphomonoester.. Its function is as follows. Digests double-stranded RNA. Involved in the processing of primary rRNA transcript to yield the immediate precursors to the large and small rRNAs (23S and 16S). Processes some mRNAs, and tRNAs when they are encoded in the rRNA operon. Processes pre-crRNA and tracrRNA of type II CRISPR loci if present in the organism. In Roseiflexus sp. (strain RS-1), this protein is Ribonuclease 3.